The following is a 1155-amino-acid chain: PAN2-PAN3 deadenylation complex catalytic subunit pan2 (1155 aa).

WD repeat units lie at residues 102 to 145 (THED…DKLP) and 276 to 315 (ANVS…HFNE). Residues 316–452 (MSKEVEFADV…GTKLNGEAED (137 aa)) form a linker region. Positions 453-822 (DPLLKYSNVE…VPCVLAYQVK (370 aa)) constitute a USP domain. Positions 871 to 1049 (VALDTEFVDL…IEDARMALRL (179 aa)) constitute an Exonuclease domain. 4 residues coordinate a divalent metal cation: D874, E876, D983, and D1042. Positions 1095–1155 (TAVTMQNNSG…GDFFGGSPLK (61 aa)) are disordered. Positions 1097-1106 (VTMQNNSGRN) are enriched in polar residues. Low complexity predominate over residues 1107-1124 (TPSTPEVTAPTASAPTTP).

This sequence belongs to the peptidase C19 family. PAN2 subfamily. In terms of assembly, forms a heterotrimer with an asymmetric homodimer of the regulatory subunit pan3 to form the poly(A)-nuclease (PAN) deadenylation complex. A divalent metal cation is required as a cofactor.

It is found in the cytoplasm. The enzyme catalyses Exonucleolytic cleavage of poly(A) to 5'-AMP.. With respect to regulation, positively regulated by the regulatory subunit pan3. Its function is as follows. Catalytic subunit of the poly(A)-nuclease (PAN) deadenylation complex, one of two cytoplasmic mRNA deadenylases involved in mRNA turnover. PAN specifically shortens poly(A) tails of RNA and the activity is stimulated by poly(A)-binding protein pab1. PAN deadenylation is followed by rapid degradation of the shortened mRNA tails by the CCR4-NOT complex. Deadenylated mRNAs are then degraded by two alternative mechanisms, namely exosome-mediated 3'-5' exonucleolytic degradation, or deadenylation-dependent mRNA decaping and subsequent 5'-3' exonucleolytic degradation by xrn1. May also be involved in post-transcriptional maturation of mRNA poly(A) tails. This is PAN2-PAN3 deadenylation complex catalytic subunit pan2 from Aspergillus oryzae (strain ATCC 42149 / RIB 40) (Yellow koji mold).